Here is a 182-residue protein sequence, read N- to C-terminus: Protein Syd (182 aa).

Belongs to the Syd family.

The protein localises to the cell inner membrane. In terms of biological role, interacts with the SecY protein in vivo. May bind preferentially to an uncomplexed state of SecY, thus functioning either as a chelating agent for excess SecY in the cell or as a regulatory factor that negatively controls the translocase function. This chain is Protein Syd, found in Aeromonas hydrophila subsp. hydrophila (strain ATCC 7966 / DSM 30187 / BCRC 13018 / CCUG 14551 / JCM 1027 / KCTC 2358 / NCIMB 9240 / NCTC 8049).